Consider the following 940-residue polypeptide: Protein translocase subunit SecA (940 aa).

ATP-binding positions include Q85, 103-107 (GEGKT), and D505. Residues 851 to 940 (PVQDGAERPS…KGGGGRRRKK (90 aa)) are disordered. Positions 855 to 865 (GAERPSLEKEG) are enriched in basic and acidic residues. Residues 928–940 (RRRKGGGGRRRKK) show a composition bias toward basic residues.

This sequence belongs to the SecA family. Monomer and homodimer. Part of the essential Sec protein translocation apparatus which comprises SecA, SecYEG and auxiliary proteins SecDF. Other proteins may also be involved.

The protein resides in the cell membrane. It localises to the cytoplasm. It carries out the reaction ATP + H2O + cellular proteinSide 1 = ADP + phosphate + cellular proteinSide 2.. Functionally, part of the Sec protein translocase complex. Interacts with the SecYEG preprotein conducting channel. Has a central role in coupling the hydrolysis of ATP to the transfer of proteins into and across the cell membrane, serving as an ATP-driven molecular motor driving the stepwise translocation of polypeptide chains across the membrane. In Streptomyces griseus, this protein is Protein translocase subunit SecA.